The chain runs to 205 residues: Putative 3-methyladenine DNA glycosylase (205 aa).

It belongs to the DNA glycosylase MPG family.

The polypeptide is Putative 3-methyladenine DNA glycosylase (Bacillus cereus (strain AH187)).